A 497-amino-acid chain; its full sequence is Iron-sulfur cluster assembly factor IBA57, mitochondrial (497 aa).

Residues 1-27 constitute a mitochondrion transit peptide; sequence MFISRRCRIKGFTLKNLLWFRSSSTRF. The tract at residues 414-433 is disordered; the sequence is PTLNPFTNKPPERTKRKQRP.

Belongs to the GcvT family. CAF17/IBA57 subfamily. Interacts with CCR4, ISA1 and ISA2.

It is found in the mitochondrion matrix. In terms of biological role, required for lysine and glutamate prototrophy and mitochondrial genome maintenance. Has a role in the maturation of mitochondrial aconitase-type and radical-SAM Fe/S proteins biotin synthase and lipoic acid synthase. The polypeptide is Iron-sulfur cluster assembly factor IBA57, mitochondrial (Saccharomyces cerevisiae (strain ATCC 204508 / S288c) (Baker's yeast)).